Here is a 355-residue protein sequence, read N- to C-terminus: NADH dehydrogenase [ubiquinone] 1 alpha subcomplex subunit 10, mitochondrial (355 aa).

A mitochondrion-targeting transit peptide spans 1–35 (MALRLLKLAATSASARVVAAGAQRVRGIHSSVQCK). The residue at position 250 (Ser-250) is a Phosphoserine; by PINK1. Lys-285 bears the N6-succinyllysine mark.

The protein belongs to the complex I NDUFA10 subunit family. In terms of assembly, complex I is composed of 45 different subunits. This a component of the hydrophobic protein fraction. FAD is required as a cofactor. In terms of processing, phosphorylation at Ser-250 by PINK1 is required for the binding and/or reduction of the complex I substrate ubiquinone.

Its subcellular location is the mitochondrion matrix. In terms of biological role, accessory subunit of the mitochondrial membrane respiratory chain NADH dehydrogenase (Complex I), that is believed not to be involved in catalysis. Complex I functions in the transfer of electrons from NADH to the respiratory chain. The immediate electron acceptor for the enzyme is believed to be ubiquinone. The protein is NADH dehydrogenase [ubiquinone] 1 alpha subcomplex subunit 10, mitochondrial (NDUFA10) of Homo sapiens (Human).